The chain runs to 1778 residues: Protein TIC 214 (1778 aa).

The next 6 helical transmembrane spans lie at 18–38 (IINSVVVVGLYYGFLTTFSIG), 67–87 (FIAGQLMMFISIYYAPLHLAL), 90–110 (PHTITVLALPYLLFHFFWNNN), 132–152 (VFLNNLIFQLFNHFILPSSML), 175–195 (VGWLIGHILFMKWVGLVLVWI), and 226–246 (IFSILLFITCVYYLGRIPSPI). Residues 1498–1520 (GQGELESDNEKKRNPESALSNQE) form a disordered region.

Belongs to the TIC214 family. As to quaternary structure, part of the Tic complex.

The protein resides in the plastid. It localises to the chloroplast inner membrane. Functionally, involved in protein precursor import into chloroplasts. May be part of an intermediate translocation complex acting as a protein-conducting channel at the inner envelope. The protein is Protein TIC 214 of Arabis hirsuta (Hairy rock-cress).